Consider the following 175-residue polypeptide: uncharacterized protein (175 aa).

A helical membrane pass occupies residues 143 to 166 (TCFLFCAFVTSIFIETDYSIFFLL).

The protein resides in the membrane. This is an uncharacterized protein from Saccharomyces cerevisiae (strain ATCC 204508 / S288c) (Baker's yeast).